The primary structure comprises 657 residues: Translation factor GUF1, mitochondrial (657 aa).

A mitochondrion-targeting transit peptide spans 1–21; the sequence is MLKTLGLRSLCPSLGGRGFRR. One can recognise a tr-type G domain in the interval 56-240; sequence ENYRNFSIVA…TIVDRIPPPT (185 aa). GTP-binding positions include 65–72, 132–136, and 186–189; these read AHVDHGKS, DTPGH, and NKID.

This sequence belongs to the TRAFAC class translation factor GTPase superfamily. Classic translation factor GTPase family. LepA subfamily.

The protein resides in the mitochondrion inner membrane. The catalysed reaction is GTP + H2O = GDP + phosphate + H(+). In terms of biological role, promotes mitochondrial protein synthesis. May act as a fidelity factor of the translation reaction, by catalyzing a one-codon backward translocation of tRNAs on improperly translocated ribosomes. Binds to mitochondrial ribosomes in a GTP-dependent manner. The polypeptide is Translation factor GUF1, mitochondrial (Candida glabrata (strain ATCC 2001 / BCRC 20586 / JCM 3761 / NBRC 0622 / NRRL Y-65 / CBS 138) (Yeast)).